A 184-amino-acid polypeptide reads, in one-letter code: Inactive ribonuclease-like protein 9 (184 aa).

Residues 1–25 (MKPLVIKFAWPLPLLLLLLLPPKLQ) form the signal peptide. Cystine bridges form between C93–C148, C111–C163, and C118–C125. N-linked (GlcNAc...) asparagine glycans are attached at residues N147 and N179.

It belongs to the pancreatic ribonuclease family.

It is found in the secreted. Functionally, does not exhibit any ribonuclease activity. This chain is Inactive ribonuclease-like protein 9 (Rnase9), found in Mus musculus (Mouse).